The following is a 290-amino-acid chain: TP53-target gene 5 protein (290 aa).

Basic residues predominate over residues 1-13; the sequence is MSPSAKKRPKNSR. Disordered stretches follow at residues 1–29 and 114–178; these read MSPSAKKRPKNSRVSKMQDEKLRDETEQP and KLES…RQPL. 3 stretches are compositionally biased toward basic and acidic residues: residues 16–26, 114–130, and 138–167; these read KMQDEKLRDET, KLESTGDPKKKEYKEWK, and RNKEKTSLAAMPRKEKHIEPEVPRTSRDDS.

Interacts with p53/TP53. As to expression, highly expressed in heart, brain and small intestine. Less abundant in skeletal muscle, spleen, prostate, ovary and colon. A smaller transcript is expressed specifically in the testis.

The protein resides in the cytoplasm. It is found in the nucleus. In terms of biological role, may play a significant role in p53/TP53-mediating signaling pathway. The sequence is that of TP53-target gene 5 protein (TP53TG5) from Homo sapiens (Human).